A 491-amino-acid polypeptide reads, in one-letter code: Cobyric acid synthase (491 aa).

In terms of domain architecture, GATase cobBQ-type spans P249–F439. C329 serves as the catalytic Nucleophile. The active site involves H431.

Belongs to the CobB/CobQ family. CobQ subfamily.

It participates in cofactor biosynthesis; adenosylcobalamin biosynthesis. Its function is as follows. Catalyzes amidations at positions B, D, E, and G on adenosylcobyrinic A,C-diamide. NH(2) groups are provided by glutamine, and one molecule of ATP is hydrogenolyzed for each amidation. In Clostridium tetani (strain Massachusetts / E88), this protein is Cobyric acid synthase.